The primary structure comprises 565 residues: DNA mismatch repair protein MutL (565 aa).

It belongs to the DNA mismatch repair MutL/HexB family.

Its function is as follows. This protein is involved in the repair of mismatches in DNA. It is required for dam-dependent methyl-directed DNA mismatch repair. May act as a 'molecular matchmaker', a protein that promotes the formation of a stable complex between two or more DNA-binding proteins in an ATP-dependent manner without itself being part of a final effector complex. This chain is DNA mismatch repair protein MutL, found in Desulforudis audaxviator (strain MP104C).